A 500-amino-acid polypeptide reads, in one-letter code: Aspartyl/glutamyl-tRNA(Asn/Gln) amidotransferase subunit B (500 aa).

This sequence belongs to the GatB/GatE family. GatB subfamily. In terms of assembly, heterotrimer of A, B and C subunits.

The enzyme catalyses L-glutamyl-tRNA(Gln) + L-glutamine + ATP + H2O = L-glutaminyl-tRNA(Gln) + L-glutamate + ADP + phosphate + H(+). It carries out the reaction L-aspartyl-tRNA(Asn) + L-glutamine + ATP + H2O = L-asparaginyl-tRNA(Asn) + L-glutamate + ADP + phosphate + 2 H(+). Allows the formation of correctly charged Asn-tRNA(Asn) or Gln-tRNA(Gln) through the transamidation of misacylated Asp-tRNA(Asn) or Glu-tRNA(Gln) in organisms which lack either or both of asparaginyl-tRNA or glutaminyl-tRNA synthetases. The reaction takes place in the presence of glutamine and ATP through an activated phospho-Asp-tRNA(Asn) or phospho-Glu-tRNA(Gln). This is Aspartyl/glutamyl-tRNA(Asn/Gln) amidotransferase subunit B from Brucella anthropi (strain ATCC 49188 / DSM 6882 / CCUG 24695 / JCM 21032 / LMG 3331 / NBRC 15819 / NCTC 12168 / Alc 37) (Ochrobactrum anthropi).